The following is an 858-amino-acid chain: Ubiquitin carboxyl-terminal hydrolase 13 (858 aa).

Position 112 is a phosphoserine (S112). The segment at 185-293 (PVSKYANNLV…KHLAHFGIDM (109 aa)) adopts a UBP-type; degenerate zinc-finger fold. Zn(2+) contacts are provided by C209, C212, C229, and H242. K309 participates in a covalent cross-link: Glycyl lysine isopeptide (Lys-Gly) (interchain with G-Cter in SUMO2). The 523-residue stretch at 334-856 (TGLKNLGNSC…LGYMYFYRRI (523 aa)) folds into the USP domain. The active-site Nucleophile is C343. Residue K403 forms a Glycyl lysine isopeptide (Lys-Gly) (interchain with G-Cter in SUMO2) linkage. UBA domains are found at residues 650–691 (DIDE…IIVH) and 722–762 (QPPE…IFSH). The active-site Proton acceptor is H818.

This sequence belongs to the peptidase C19 family. As to quaternary structure, interacts with UFD1. Interacts (via UBA domains) with SIAH2 (when ubiquitinated). Interacts with BAG6; the interaction is direct and may mediate UBL4A deubiquitination. Interacts (via UBA 2 domain) with AMFR; the interaction is direct. Interacts with UBL4A; may be indirect via BAG6. Interacts with NEDD4.

The protein localises to the cytoplasm. It catalyses the reaction Thiol-dependent hydrolysis of ester, thioester, amide, peptide and isopeptide bonds formed by the C-terminal Gly of ubiquitin (a 76-residue protein attached to proteins as an intracellular targeting signal).. Specifically inhibited by spautin-1 (specific and potent autophagy inhibitor-1), a derivative of MBCQ that binds to USP13 and inhibits deubiquitinase activity. Regulated by PIK3C3/VPS34-containing complexes. The weak deubiquitinase activity in vitro suggests the existence of some mechanism that activates the enzyme. Deubiquitinase that mediates deubiquitination of target proteins such as BECN1, MITF, SKP2 and USP10 and is involved in various processes such as autophagy, endoplasmic reticulum-associated degradation (ERAD), cell cycle progression or DNA damage response. Component of a regulatory loop that controls autophagy and p53/TP53 levels: mediates deubiquitination of BECN1, a key regulator of autophagy, leading to stabilize the PIK3C3/VPS34-containing complexes. Alternatively, forms with NEDD4 a deubiquitination complex, which subsequently stabilizes VPS34 to promote autophagy. Also deubiquitinates USP10, an essential regulator of p53/TP53 stability. In turn, PIK3C3/VPS34-containing complexes regulate USP13 stability, suggesting the existence of a regulatory system by which PIK3C3/VPS34-containing complexes regulate p53/TP53 protein levels via USP10 and USP13. Recruited by nuclear UFD1 and mediates deubiquitination of SKP2, thereby regulating endoplasmic reticulum-associated degradation (ERAD). Also regulates ERAD through the deubiquitination of UBL4A a component of the BAG6/BAT3 complex. Mediates stabilization of SIAH2 independently of deubiquitinase activity: binds ubiquitinated SIAH2 and acts by impairing SIAH2 autoubiquitination. Regulates the cell cycle progression by stabilizing cell cycle proteins such as SKP2 and AURKB. In addition, plays an important role in maintaining genomic stability and in DNA replication checkpoint activation via regulation of RAP80 and TOPBP1. Deubiquitinates the multifunctional protein HMGB1 and subsequently drives its nucleocytoplasmic localization and its secretion. Positively regulates type I and type II interferon signalings by deubiquitinating STAT1 but negatively regulates antiviral response by deubiquitinating STING1. The polypeptide is Ubiquitin carboxyl-terminal hydrolase 13 (Usp13) (Mus musculus (Mouse)).